Reading from the N-terminus, the 590-residue chain is Ankyrin repeat domain-containing protein 13A (590 aa).

2 ANK repeats span residues 40–69 (RGRTLLHLAVSLGHLESARVLLRHKADVTK) and 73–102 (QGWTVLHEAVSTGDPEMVYTVLQHRDYHNT). Phosphoserine is present on Ser-205. 4 consecutive UIM domains span residues 483–502 (EDYEIMQFAIQQSLLESSRS), 519–538 (TYDAQYERAIQESLLTSTEG), 549–568 (RFDNDLQLAMELSAKELEEW), and 574–590 (EEEAELQQVLQLSLTDK). Ser-586 is subject to Phosphoserine.

Interacts (via the UIM 3 and 4 repeats) with EGFR (ubiquitinated); the interaction is direct, inhibited by ANKRD13A monoubiquitination and may regulate EGFR internalization. Post-translationally, monoubiquitinated, inhibits interaction with ubiquitinated EGFR.

The protein resides in the cell membrane. It localises to the late endosome. Ubiquitin-binding protein that specifically recognizes and binds 'Lys-63'-linked ubiquitin. Does not bind 'Lys-48'-linked ubiquitin. Positively regulates the internalization of ligand-activated EGFR by binding to the Ub moiety of ubiquitinated EGFR at the cell membrane. In Homo sapiens (Human), this protein is Ankyrin repeat domain-containing protein 13A (ANKRD13A).